The sequence spans 589 residues: MNVLSGAMRYATPWRTYRRLLSYAREYRWLLVVAACGALLEAVAGSTFLALMKPITNETFIERNREVALWLPLGIVGLFLLRGIAGYITDMAMGRAARSIARDFRVCVLTKYFRLPGSRFDGEPVASMLVRLGSDSEQVAHAVIDAMKVMVQQTLQVIGALVVMLWYSWTVTLAILLVAPLLAWVMQRVAKRYRRISHHIQESNAQLMQAADQALSNYQDVKVYAAQESELERYARLANINLGLAIKVESTRSLSSAAVQLLGAVGLAMLLLIAGHEALAGRLSPGDFVSLMTSMIAVIPALKQLTNVQNMLQSGIASAQRLFSVLDSPDELDTGRRPLGRARGFIEFRGITARYPGRSAPVLDSVSFVAAPGTVTAIVGRSGSGKSSLIKLIPRFYEPESGQILLDGHPLQDYLLADLRRQIALVGQQVMLFDGSIAENIAYGEMRQVVSEEIERVVVDANAQDFVNQLPEGLQFQVGVKGGRLSGGQRQRLAIARAMLKDAPILILDEATAALDNESERLVQDALQRLMPERTTLVIAHRLSTIKHADQVLVMDQGRIIESGTHVDLLARDGLYAYLYSMQFRERPT.

5 helical membrane passes run 29-49 (WLLVVAACGALLEAVAGSTFL), 68-88 (ALWLPLGIVGLFLLRGIAGYI), 157-177 (VIGALVVMLWYSWTVTLAILL), 254-274 (LSSAAVQLLGAVGLAMLLLIA), and 283-303 (LSPGDFVSLMTSMIAVIPALK). An ABC transmembrane type-1 domain is found at 32–314 (VVAACGALLE…LTNVQNMLQS (283 aa)). An ABC transporter domain is found at 346-582 (IEFRGITARY…DGLYAYLYSM (237 aa)). Position 380-387 (380-387 (GRSGSGKS)) interacts with ATP.

Belongs to the ABC transporter superfamily. Lipid exporter (TC 3.A.1.106) family. As to quaternary structure, homodimer.

Its subcellular location is the cell inner membrane. The enzyme catalyses ATP + H2O + lipid A-core oligosaccharideSide 1 = ADP + phosphate + lipid A-core oligosaccharideSide 2.. Its function is as follows. Involved in lipopolysaccharide (LPS) biosynthesis. Translocates lipid A-core from the inner to the outer leaflet of the inner membrane. Transmembrane domains (TMD) form a pore in the inner membrane and the ATP-binding domain (NBD) is responsible for energy generation. The protein is ATP-dependent lipid A-core flippase of Xylella fastidiosa (strain 9a5c).